Here is a 399-residue protein sequence, read N- to C-terminus: S-adenosylmethionine synthase (399 aa).

ATP is bound at residue His-17. Asp-19 is a binding site for Mg(2+). Glu-45 lines the K(+) pocket. Residues Glu-58 and Gln-101 each coordinate L-methionine. The flexible loop stretch occupies residues 101-111 (QSPDIAQGVDE). Residues 177–179 (DAK), 244–245 (RF), Asp-253, 259–260 (RK), Ala-276, and Lys-280 each bind ATP. An L-methionine-binding site is contributed by Asp-253. Lys-284 lines the L-methionine pocket.

It belongs to the AdoMet synthase family. As to quaternary structure, homotetramer; dimer of dimers. Mg(2+) is required as a cofactor. Requires K(+) as cofactor.

It localises to the cytoplasm. It carries out the reaction L-methionine + ATP + H2O = S-adenosyl-L-methionine + phosphate + diphosphate. Its pathway is amino-acid biosynthesis; S-adenosyl-L-methionine biosynthesis; S-adenosyl-L-methionine from L-methionine: step 1/1. Catalyzes the formation of S-adenosylmethionine (AdoMet) from methionine and ATP. The overall synthetic reaction is composed of two sequential steps, AdoMet formation and the subsequent tripolyphosphate hydrolysis which occurs prior to release of AdoMet from the enzyme. This is S-adenosylmethionine synthase from Listeria monocytogenes serotype 4b (strain CLIP80459).